Consider the following 93-residue polypeptide: YcgL domain-containing protein KPN78578_22820 (93 aa).

The region spanning 1 to 85 (MFCVIYRSTK…PSENLLKKHL (85 aa)) is the YcgL domain.

The protein is YcgL domain-containing protein KPN78578_22820 of Klebsiella pneumoniae subsp. pneumoniae (strain ATCC 700721 / MGH 78578).